The primary structure comprises 227 residues: Probable proteasome subunit beta type-2 (227 aa).

Positions 1-6 are cleaved as a propeptide — removed in mature form; that stretch reads MITKTG. Threonine 7 (nucleophile) is an active-site residue.

It belongs to the peptidase T1B family. As to quaternary structure, the 26S proteasome consists of a 20S proteasome core and two 19S regulatory subunits. The 20S proteasome core is composed of 28 subunits that are arranged in four stacked rings, resulting in a barrel-shaped structure. The two end rings are each formed by seven alpha subunits, and the two central rings are each formed by seven beta subunits. The catalytic chamber with the active sites is on the inside of the barrel.

The protein resides in the cytoplasm. It is found in the nucleus. It catalyses the reaction Cleavage of peptide bonds with very broad specificity.. In terms of biological role, the proteasome degrades poly-ubiquitinated proteins in the cytoplasm and in the nucleus. It is essential for the regulated turnover of proteins and for the removal of misfolded proteins. The proteasome is a multicatalytic proteinase complex that is characterized by its ability to cleave peptides with Arg, Phe, Tyr, Leu, and Glu adjacent to the leaving group at neutral or slightly basic pH. It has an ATP-dependent proteolytic activity. This chain is Probable proteasome subunit beta type-2 (PUP1), found in Encephalitozoon cuniculi (strain GB-M1) (Microsporidian parasite).